Consider the following 123-residue polypeptide: ATP synthase epsilon chain (123 aa).

The disordered stretch occupies residues 96–123 (ESRKQSAETEHDKAVAESELRAVKRMEA).

Belongs to the ATPase epsilon chain family. In terms of assembly, F-type ATPases have 2 components, CF(1) - the catalytic core - and CF(0) - the membrane proton channel. CF(1) has five subunits: alpha(3), beta(3), gamma(1), delta(1), epsilon(1). CF(0) has three main subunits: a, b and c.

It localises to the cell membrane. Produces ATP from ADP in the presence of a proton gradient across the membrane. The chain is ATP synthase epsilon chain from Corynebacterium jeikeium (strain K411).